The following is a 239-amino-acid chain: 1-(5-phosphoribosyl)-5-[(5-phosphoribosylamino)methylideneamino] imidazole-4-carboxamide isomerase (239 aa).

Aspartate 8 (proton acceptor) is an active-site residue. Aspartate 130 serves as the catalytic Proton donor.

Belongs to the HisA/HisF family.

It localises to the cytoplasm. It carries out the reaction 1-(5-phospho-beta-D-ribosyl)-5-[(5-phospho-beta-D-ribosylamino)methylideneamino]imidazole-4-carboxamide = 5-[(5-phospho-1-deoxy-D-ribulos-1-ylimino)methylamino]-1-(5-phospho-beta-D-ribosyl)imidazole-4-carboxamide. It functions in the pathway amino-acid biosynthesis; L-histidine biosynthesis; L-histidine from 5-phospho-alpha-D-ribose 1-diphosphate: step 4/9. In Lachnoclostridium phytofermentans (strain ATCC 700394 / DSM 18823 / ISDg) (Clostridium phytofermentans), this protein is 1-(5-phosphoribosyl)-5-[(5-phosphoribosylamino)methylideneamino] imidazole-4-carboxamide isomerase.